The primary structure comprises 107 residues: ATP-dependent Clp protease adapter protein ClpS (107 aa).

The protein belongs to the ClpS family. In terms of assembly, binds to the N-terminal domain of the chaperone ClpA.

Functionally, involved in the modulation of the specificity of the ClpAP-mediated ATP-dependent protein degradation. In Syntrophus aciditrophicus (strain SB), this protein is ATP-dependent Clp protease adapter protein ClpS.